The following is a 1064-amino-acid chain: DNA-directed RNA polymerase subunit beta (1064 aa).

It belongs to the RNA polymerase beta chain family. As to quaternary structure, in plastids the minimal PEP RNA polymerase catalytic core is composed of four subunits: alpha, beta, beta', and beta''. When a (nuclear-encoded) sigma factor is associated with the core the holoenzyme is formed, which can initiate transcription.

Its subcellular location is the plastid. The protein localises to the chloroplast. The catalysed reaction is RNA(n) + a ribonucleoside 5'-triphosphate = RNA(n+1) + diphosphate. Its function is as follows. DNA-dependent RNA polymerase catalyzes the transcription of DNA into RNA using the four ribonucleoside triphosphates as substrates. This Jasminum nudiflorum (Winter jasmine) protein is DNA-directed RNA polymerase subunit beta.